Here is a 264-residue protein sequence, read N- to C-terminus: tRNA pseudouridine synthase A (264 aa).

Residue D51 is the Nucleophile of the active site. Y109 contacts substrate.

It belongs to the tRNA pseudouridine synthase TruA family. In terms of assembly, homodimer.

The enzyme catalyses uridine(38/39/40) in tRNA = pseudouridine(38/39/40) in tRNA. Its function is as follows. Formation of pseudouridine at positions 38, 39 and 40 in the anticodon stem and loop of transfer RNAs. This chain is tRNA pseudouridine synthase A, found in Vibrio atlanticus (strain LGP32) (Vibrio splendidus (strain Mel32)).